The sequence spans 453 residues: Bifunctional protein GlmU (453 aa).

A pyrophosphorylase region spans residues methionine 1–arginine 226. Residues leucine 8–glycine 11, lysine 22, glutamine 73, glycine 78–threonine 79, tyrosine 100–aspartate 102, glycine 137, glutamate 151, asparagine 166, and asparagine 224 each bind UDP-N-acetyl-alpha-D-glucosamine. Aspartate 102 provides a ligand contact to Mg(2+). Residue asparagine 224 coordinates Mg(2+). Residues alanine 227–glutamine 247 are linker. An N-acetyltransferase region spans residues glycine 248 to lysine 453. UDP-N-acetyl-alpha-D-glucosamine contacts are provided by arginine 330 and lysine 348. Histidine 360 (proton acceptor) is an active-site residue. The UDP-N-acetyl-alpha-D-glucosamine site is built by tyrosine 363 and asparagine 374. Residues alanine 377, asparagine 383–tyrosine 384, serine 402, alanine 420, and arginine 437 contribute to the acetyl-CoA site.

It in the N-terminal section; belongs to the N-acetylglucosamine-1-phosphate uridyltransferase family. The protein in the C-terminal section; belongs to the transferase hexapeptide repeat family. As to quaternary structure, homotrimer. The cofactor is Mg(2+).

It localises to the cytoplasm. The catalysed reaction is alpha-D-glucosamine 1-phosphate + acetyl-CoA = N-acetyl-alpha-D-glucosamine 1-phosphate + CoA + H(+). It carries out the reaction N-acetyl-alpha-D-glucosamine 1-phosphate + UTP + H(+) = UDP-N-acetyl-alpha-D-glucosamine + diphosphate. It functions in the pathway nucleotide-sugar biosynthesis; UDP-N-acetyl-alpha-D-glucosamine biosynthesis; N-acetyl-alpha-D-glucosamine 1-phosphate from alpha-D-glucosamine 6-phosphate (route II): step 2/2. It participates in nucleotide-sugar biosynthesis; UDP-N-acetyl-alpha-D-glucosamine biosynthesis; UDP-N-acetyl-alpha-D-glucosamine from N-acetyl-alpha-D-glucosamine 1-phosphate: step 1/1. Its pathway is bacterial outer membrane biogenesis; LPS lipid A biosynthesis. In terms of biological role, catalyzes the last two sequential reactions in the de novo biosynthetic pathway for UDP-N-acetylglucosamine (UDP-GlcNAc). The C-terminal domain catalyzes the transfer of acetyl group from acetyl coenzyme A to glucosamine-1-phosphate (GlcN-1-P) to produce N-acetylglucosamine-1-phosphate (GlcNAc-1-P), which is converted into UDP-GlcNAc by the transfer of uridine 5-monophosphate (from uridine 5-triphosphate), a reaction catalyzed by the N-terminal domain. In Vibrio parahaemolyticus serotype O3:K6 (strain RIMD 2210633), this protein is Bifunctional protein GlmU.